Consider the following 325-residue polypeptide: Aspartate carbamoyltransferase catalytic subunit (325 aa).

Carbamoyl phosphate-binding residues include Arg-55 and Thr-56. An L-aspartate-binding site is contributed by Lys-83. Residues Arg-105, His-135, and Gln-138 each coordinate carbamoyl phosphate. Positions 176 and 230 each coordinate L-aspartate. Residues Gly-271 and Pro-272 each contribute to the carbamoyl phosphate site.

It belongs to the aspartate/ornithine carbamoyltransferase superfamily. ATCase family. In terms of assembly, heterododecamer (2C3:3R2) of six catalytic PyrB chains organized as two trimers (C3), and six regulatory PyrI chains organized as three dimers (R2).

It catalyses the reaction carbamoyl phosphate + L-aspartate = N-carbamoyl-L-aspartate + phosphate + H(+). Its pathway is pyrimidine metabolism; UMP biosynthesis via de novo pathway; (S)-dihydroorotate from bicarbonate: step 2/3. Catalyzes the condensation of carbamoyl phosphate and aspartate to form carbamoyl aspartate and inorganic phosphate, the committed step in the de novo pyrimidine nucleotide biosynthesis pathway. In Streptomyces avermitilis (strain ATCC 31267 / DSM 46492 / JCM 5070 / NBRC 14893 / NCIMB 12804 / NRRL 8165 / MA-4680), this protein is Aspartate carbamoyltransferase catalytic subunit.